Consider the following 411-residue polypeptide: Chorismate synthase (411 aa).

NADP(+) contacts are provided by arginine 40 and arginine 46. FMN contacts are provided by residues 135–137 (RAS) and 256–257 (QA). Positions 278-299 (HDGIARGADGRPRRTSDRAGGI) are disordered. A compositionally biased stretch (basic and acidic residues) spans 285 to 294 (ADGRPRRTSD). FMN contacts are provided by residues alanine 301, 316 to 320 (KPIAT), and arginine 342.

The protein belongs to the chorismate synthase family. In terms of assembly, homotetramer. FMNH2 is required as a cofactor.

The enzyme catalyses 5-O-(1-carboxyvinyl)-3-phosphoshikimate = chorismate + phosphate. The protein operates within metabolic intermediate biosynthesis; chorismate biosynthesis; chorismate from D-erythrose 4-phosphate and phosphoenolpyruvate: step 7/7. Functionally, catalyzes the anti-1,4-elimination of the C-3 phosphate and the C-6 proR hydrogen from 5-enolpyruvylshikimate-3-phosphate (EPSP) to yield chorismate, which is the branch point compound that serves as the starting substrate for the three terminal pathways of aromatic amino acid biosynthesis. This reaction introduces a second double bond into the aromatic ring system. The polypeptide is Chorismate synthase (Micrococcus luteus (strain ATCC 4698 / DSM 20030 / JCM 1464 / CCM 169 / CCUG 5858 / IAM 1056 / NBRC 3333 / NCIMB 9278 / NCTC 2665 / VKM Ac-2230) (Micrococcus lysodeikticus)).